A 164-amino-acid polypeptide reads, in one-letter code: Arginine repressor (164 aa).

This sequence belongs to the ArgR family.

The protein localises to the cytoplasm. It participates in amino-acid biosynthesis; L-arginine biosynthesis [regulation]. In terms of biological role, regulates arginine biosynthesis genes. In Mycolicibacterium paratuberculosis (strain ATCC BAA-968 / K-10) (Mycobacterium paratuberculosis), this protein is Arginine repressor.